The chain runs to 335 residues: Nucleotide-binding protein CYA_0911 (335 aa).

20-27 is an ATP binding site; sequence GLTGSGKT. The segment at 306 to 335 is disordered; the sequence is ARFGPPPPAAGVEQQQVRIPLAGVPAPPHD.

It belongs to the RapZ-like family.

Functionally, displays ATPase and GTPase activities. The sequence is that of Nucleotide-binding protein CYA_0911 from Synechococcus sp. (strain JA-3-3Ab) (Cyanobacteria bacterium Yellowstone A-Prime).